We begin with the raw amino-acid sequence, 434 residues long: Phosphomethylpyrimidine synthase (434 aa).

Substrate is bound by residues Asn-74, Met-103, Tyr-132, His-171, Ser-193 to Gly-195, Asp-234 to Arg-237, and Glu-273. Residue His-277 coordinates Zn(2+). Tyr-300 provides a ligand contact to substrate. His-341 contacts Zn(2+). The [4Fe-4S] cluster site is built by Cys-417, Cys-420, and Cys-424.

Belongs to the ThiC family. As to quaternary structure, homodimer. The cofactor is [4Fe-4S] cluster.

It catalyses the reaction 5-amino-1-(5-phospho-beta-D-ribosyl)imidazole + S-adenosyl-L-methionine = 4-amino-2-methyl-5-(phosphooxymethyl)pyrimidine + CO + 5'-deoxyadenosine + formate + L-methionine + 3 H(+). It participates in cofactor biosynthesis; thiamine diphosphate biosynthesis. In terms of biological role, catalyzes the synthesis of the hydroxymethylpyrimidine phosphate (HMP-P) moiety of thiamine from aminoimidazole ribotide (AIR) in a radical S-adenosyl-L-methionine (SAM)-dependent reaction. This is Phosphomethylpyrimidine synthase from Desulfotalea psychrophila (strain LSv54 / DSM 12343).